Reading from the N-terminus, the 456-residue chain is B-cell linker protein (456 aa).

Residues 36–301 (IKKLKVKAPP…QSPVFPPAQK (266 aa)) form a disordered region. Positions 57–74 (PADEEEQWSDDFDSDYEN) are enriched in acidic residues. Y72, Y84, Y96, Y178, and Y189 each carry phosphotyrosine; by SYK. Over residues 173 to 187 (EDEADYVVPVEDNDE) the composition is skewed to acidic residues. The segment covering 212–226 (PNSSTPASPPGTASG) has biased composition (low complexity). The segment covering 236 to 245 (SPPPAAPSPL) has biased composition (pro residues). The segment covering 251–260 (KPTTPLKTTP) has biased composition (low complexity). Residues 271–289 (CEEKPIPAERHRGSSHRQE) show a composition bias toward basic and acidic residues. The region spanning 346–453 (WYAGACDRKS…KDSTRLKYAV (108 aa)) is the SH2 domain.

As to quaternary structure, associates with PLCG1, VAV1 and NCK1 in a B-cell antigen receptor-dependent fashion. Interacts with VAV3, PLCG2 and GRB2. Interacts through its SH2 domain with CD79A. Interacts (via SH2 domain) with SYK; phosphorylated and activated by SYK. Interacts (via SH2 domain) with SCIMP; this interaction is dependent on phosphorylation of SCIMP 'Tyr-131'. Post-translationally, following BCR activation, phosphorylated on tyrosine residues by SYK and LYN. When phosphorylated, serves as a scaffold to assemble downstream targets of antigen activation, including PLCG1, VAV1, GRB2 and NCK1. Phosphorylation of Tyr-84, Tyr-178 and Tyr-189 facilitates PLCG1 binding. Phosphorylation of Tyr-96 facilitates BTK binding. Phosphorylation of Tyr-72 facilitates VAV1 and NCK1 binding. Phosphorylation is required for both Ca(2+) and MAPK signaling pathways. In terms of tissue distribution, expressed in B-cell lineage and fibroblast cell lines (at protein level). Highest levels of expression in the spleen, with lower levels in the liver, kidney, pancreas, small intestines and colon.

It localises to the cytoplasm. Its subcellular location is the cell membrane. Its function is as follows. Functions as a central linker protein, downstream of the B-cell receptor (BCR), bridging the SYK kinase to a multitude of signaling pathways and regulating biological outcomes of B-cell function and development. Plays a role in the activation of ERK/EPHB2, MAP kinase p38 and JNK. Modulates AP1 activation. Important for the activation of NF-kappa-B and NFAT. Plays an important role in BCR-mediated PLCG1 and PLCG2 activation and Ca(2+) mobilization and is required for trafficking of the BCR to late endosomes. However, does not seem to be required for pre-BCR-mediated activation of MAP kinase and phosphatidyl-inositol 3 (PI3) kinase signaling. May be required for the RAC1-JNK pathway. Plays a critical role in orchestrating the pro-B cell to pre-B cell transition. May play an important role in BCR-induced B-cell apoptosis. This is B-cell linker protein (BLNK) from Homo sapiens (Human).